The primary structure comprises 386 residues: Cytochrome b (386 aa).

4 consecutive transmembrane segments (helical) span residues 32-52 (FGSL…TLAM), 76-98 (WMIR…LHIG), 113-133 (PWSI…LGYV), and 179-199 (FFSL…MHLL). 2 residues coordinate heme b: His-82 and His-96. Heme b is bound by residues His-183 and His-197. Residue His-202 participates in a ubiquinone binding. 4 helical membrane-spanning segments follow: residues 225–245 (YTFK…LFLF), 289–309 (LGGV…PLLD), 321–341 (LMKF…WCGS), and 348–368 (FITL…IIVP).

It belongs to the cytochrome b family. In terms of assembly, fungal cytochrome b-c1 complex contains 10 subunits; 3 respiratory subunits, 2 core proteins and 5 low-molecular weight proteins. Cytochrome b-c1 complex is a homodimer. Requires heme b as cofactor.

The protein localises to the mitochondrion inner membrane. Component of the ubiquinol-cytochrome c reductase complex (complex III or cytochrome b-c1 complex) that is part of the mitochondrial respiratory chain. The b-c1 complex mediates electron transfer from ubiquinol to cytochrome c. Contributes to the generation of a proton gradient across the mitochondrial membrane that is then used for ATP synthesis. The chain is Cytochrome b (cob) from Rhizopus oryzae (Mucormycosis agent).